Here is a 245-residue protein sequence, read N- to C-terminus: Methyltransferase-like protein 27 (245 aa).

This Homo sapiens (Human) protein is Methyltransferase-like protein 27.